The primary structure comprises 239 residues: Lactate utilization protein A (239 aa).

The protein belongs to the LutA/YkgE family.

Functionally, is involved in L-lactate degradation and allows cells to grow with lactate as the sole carbon source. This Bacillus cereus (strain G9842) protein is Lactate utilization protein A.